The chain runs to 794 residues: Zinc finger protein 148 (794 aa).

Lysine 6 participates in a covalent cross-link: Glycyl lysine isopeptide (Lys-Gly) (interchain with G-Cter in SUMO2). Serine 51 is subject to Phosphoserine. Residues lysine 88, lysine 115, and lysine 132 each participate in a glycyl lysine isopeptide (Lys-Gly) (interchain with G-Cter in SUMO2) cross-link. Residues 171–193 (HVCEHCNAAFRTNYHLQRHVFIH) form a C2H2-type 1 zinc finger. Threonine 194 carries the post-translational modification Phosphothreonine. C2H2-type zinc fingers lie at residues 199 to 221 (FQCS…EKIH) and 227 to 249 (FRCD…KRTH). Serine 250 carries the post-translational modification Phosphoserine. Residues 255–278 (YQCEYCLQYFSRTDRVLKHKRMCH) form a C2H2-type 4 zinc finger. Lysine 291 is covalently cross-linked (Glycyl lysine isopeptide (Lys-Gly) (interchain with G-Cter in SUMO2)). The interval 298–336 (EEDSGFSTSPKDNSLPKKKRQKTEKKSSGMDKESALDKS) is disordered. 2 positions are modified to phosphoserine: serine 301 and serine 306. Lysine 308 is covalently cross-linked (Glycyl lysine isopeptide (Lys-Gly) (interchain with G-Cter in SUMO2)). The segment covering 321 to 336 (EKKSSGMDKESALDKS) has biased composition (basic and acidic residues). Residue lysine 356 forms a Glycyl lysine isopeptide (Lys-Gly) (interchain with G-Cter in SUMO1); alternate linkage. A Glycyl lysine isopeptide (Lys-Gly) (interchain with G-Cter in SUMO2); alternate cross-link involves residue lysine 356. Lysine 402 participates in a covalent cross-link: Glycyl lysine isopeptide (Lys-Gly) (interchain with G-Cter in SUMO2). At serine 412 the chain carries Phosphoserine. Residues lysine 421 and lysine 424 each participate in a glycyl lysine isopeptide (Lys-Gly) (interchain with G-Cter in SUMO2) cross-link. The span at 574–588 (NSSEVPEVTPSENVG) shows a compositional bias: polar residues. A disordered region spans residues 574–599 (NSSEVPEVTPSENVGSSSQASSSDKA). An N6-acetyllysine modification is found at lysine 607. A phosphoserine mark is found at serine 665 and serine 784.

The protein belongs to the krueppel C2H2-type zinc-finger protein family. As to quaternary structure, interacts with HNRNPDL. Interacts with the 5FMC complex; the interaction requires association with CHTOP. Interacts with CAVIN1. Post-translationally, sumoylated with SUMO2. Desumoylated by SENP3, resulting in the stimulation of transcription of its target genes.

The protein localises to the nucleus. Functionally, involved in transcriptional regulation. Represses the transcription of a number of genes including gastrin, stromelysin and enolase. Binds to the G-rich box in the enhancer region of these genes. This chain is Zinc finger protein 148 (ZNF148), found in Pongo abelii (Sumatran orangutan).